Reading from the N-terminus, the 369-residue chain is Phosphoribosyl pyrophosphate synthase-associated protein 2 (369 aa).

Met1 carries the N-acetylmethionine modification. Phosphoserine is present on residues Ser219, Ser227, and Ser233.

Belongs to the ribose-phosphate pyrophosphokinase family. In terms of assembly, binds to PRPS1 and PRPS2. In terms of tissue distribution, ubiquitous.

In terms of biological role, seems to play a negative regulatory role in 5-phosphoribose 1-diphosphate synthesis. The protein is Phosphoribosyl pyrophosphate synthase-associated protein 2 (Prpsap2) of Rattus norvegicus (Rat).